The sequence spans 396 residues: Tryptophan synthase beta chain (396 aa).

Lysine 88 bears the N6-(pyridoxal phosphate)lysine mark.

It belongs to the TrpB family. In terms of assembly, tetramer of two alpha and two beta chains. Requires pyridoxal 5'-phosphate as cofactor.

It catalyses the reaction (1S,2R)-1-C-(indol-3-yl)glycerol 3-phosphate + L-serine = D-glyceraldehyde 3-phosphate + L-tryptophan + H2O. It functions in the pathway amino-acid biosynthesis; L-tryptophan biosynthesis; L-tryptophan from chorismate: step 5/5. Functionally, the beta subunit is responsible for the synthesis of L-tryptophan from indole and L-serine. This is Tryptophan synthase beta chain from Shewanella baltica (strain OS185).